Consider the following 229-residue polypeptide: Flagellar L-ring protein (229 aa).

Positions 1–23 (MNPLTRVALAVAAFAALVLALSA) are cleaved as a signal peptide. The N-palmitoyl cysteine moiety is linked to residue C24. The S-diacylglycerol cysteine moiety is linked to residue C24.

The protein belongs to the FlgH family. The basal body constitutes a major portion of the flagellar organelle and consists of four rings (L,P,S, and M) mounted on a central rod.

The protein resides in the cell outer membrane. It localises to the bacterial flagellum basal body. Functionally, assembles around the rod to form the L-ring and probably protects the motor/basal body from shearing forces during rotation. This chain is Flagellar L-ring protein, found in Anaeromyxobacter sp. (strain K).